The sequence spans 868 residues: mRNA-capping enzyme (868 aa).

K282 (N6-GMP-lysine intermediate) is an active-site residue. Residues G594 to N868 form the mRNA cap 0 methyltransferase domain. S-adenosyl-L-methionine contacts are provided by residues K607, G624, D646, and L710–I712.

It in the N-terminal section; belongs to the dsDNA virus mRNA guanylyltransferase family. This sequence in the C-terminal section; belongs to the class I-like SAM-binding methyltransferase superfamily. mRNA cap 0 methyltransferase family. In terms of assembly, part of the viral DNA-directed RNA polymerase that consists of 8 polII-like subunits (RPB1, RPB2, RPB3, RPB5, RPB6, RPB7, RPB9, RPB10), a capping enzyme and a termination factor.

It localises to the virion. It carries out the reaction a 5'-end triphospho-ribonucleoside in mRNA + H2O = a 5'-end diphospho-ribonucleoside in mRNA + phosphate + H(+). It catalyses the reaction a 5'-end diphospho-ribonucleoside in mRNA + GTP + H(+) = a 5'-end (5'-triphosphoguanosine)-ribonucleoside in mRNA + diphosphate. The enzyme catalyses a 5'-end (5'-triphosphoguanosine)-ribonucleoside in mRNA + S-adenosyl-L-methionine = a 5'-end (N(7)-methyl 5'-triphosphoguanosine)-ribonucleoside in mRNA + S-adenosyl-L-homocysteine. The protein operates within mRNA processing; mRNA capping. Probably catalyzes the second reaction in the mRNA cap formation pathway. Forms a covalent complex with GTP. In Ornithodoros (relapsing fever ticks), this protein is mRNA-capping enzyme.